A 233-amino-acid polypeptide reads, in one-letter code: 2,3,4,5-tetrahydropyridine-2,6-dicarboxylate N-acetyltransferase (233 aa).

It belongs to the transferase hexapeptide repeat family. DapH subfamily.

It carries out the reaction (S)-2,3,4,5-tetrahydrodipicolinate + acetyl-CoA + H2O = L-2-acetamido-6-oxoheptanedioate + CoA. Its pathway is amino-acid biosynthesis; L-lysine biosynthesis via DAP pathway; LL-2,6-diaminopimelate from (S)-tetrahydrodipicolinate (acetylase route): step 1/3. In terms of biological role, catalyzes the transfer of an acetyl group from acetyl-CoA to tetrahydrodipicolinate. The protein is 2,3,4,5-tetrahydropyridine-2,6-dicarboxylate N-acetyltransferase of Petrotoga mobilis (strain DSM 10674 / SJ95).